A 1068-amino-acid polypeptide reads, in one-letter code: TSC22 domain family protein 1 (1068 aa).

The tract at residues 1-98 (MHQPPESTAA…SQAQLQAQPL (98 aa)) is required for interaction with TGFBR1 and promotion of TGF-beta signaling. Disordered regions lie at residues 23–110 (AHPA…KKSG), 125–288 (ISSN…SPAS), and 602–623 (YSQAAPPVQTPLPGAPPPQQLQ). Low complexity predominate over residues 36–55 (GSASALNAAGTGVGSSATSS). The segment covering 58–70 (FPPPSLLQPPPPA) has biased composition (pro residues). Residues 84 to 100 (SLNLLSQAQLQAQPLAP) show a composition bias toward low complexity. The span at 133-142 (EDTESYDDLD) shows a compositional bias: acidic residues. Positions 216–240 (HPHHLHHHHHIHHGHHLQHGHHHPS) are enriched in basic residues. The segment covering 241–250 (HVAVASASIP) has biased composition (low complexity). The span at 261-271 (KLSTTGSSDSI) shows a compositional bias: polar residues. Serine 263 is modified (phosphoserine). Positions 272–288 (TPVAPTSAVSSSGSPAS) are enriched in low complexity. Pro residues predominate over residues 609–620 (VQTPLPGAPPPQ). The interval 1000–1021 (VLKEQIKELIEKNSQLEQENNL) is leucine-zipper. Residues 1032–1068 (AQFQAQLQTGSPPATTQPQGTTQPPAQPASQGSGPTA) form a disordered region. Positions 1039-1068 (QTGSPPATTQPQGTTQPPAQPASQGSGPTA) are enriched in low complexity.

The protein belongs to the TSC-22/Dip/Bun family. In terms of assembly, forms homodimers. Forms heterodimers. Component of a complex composed of TSC22D1 (via N-terminus), TGFBR1 and TGFBR2; the interaction between TSC22D1 and TGFBR1 is inhibited by SMAD7 and promoted by TGFB1. Interacts with SMAD7; the interaction requires TGF-beta and the interaction is inhibited by TGFBR1. Interacts with TPT1/fortilin; interaction results in the destabilization of TSC22D1 protein and prevents TSC22D1-mediated apoptosis. Interacts with SMAD4 (via N-terminus). Interacts with ACVRL1/ALK1, ACVR1/ALK2, BMPR1A/ALK3, ACVR1B/ALK4, BMPR1B/ALK6, ACVR2A/ACTRII, and BMPR2. Interacts with SMAD6. Interacts with TFE3; the interaction is enhanced in the presence of TGF-beta. As to quaternary structure, forms a heterodimer with TSC22D4/THG1. Forms a heterodimer with TSC22D4/THG1. Interacts with histone H1-2. Interacts with GNL3.

The protein resides in the cytoplasm. It is found in the nucleus. The protein localises to the cell membrane. Its subcellular location is the mitochondrion. Transcriptional repressor. Acts on the C-type natriuretic peptide (CNP) promoter. Acts to promote CASP3-mediated apoptosis. Positively regulates TGF-beta signaling by interacting with SMAD7 which inhibits binding of SMAD7 to TGFBR1, preventing recruitment of SMURF ubiquitin ligases to TGFBR1 and inhibiting SMURF-mediated ubiquitination and degradation of TGFBR1. Contributes to enhancement of TGF-beta signaling by binding to and modulating the transcription activator activity of SMAD4. Promotes TGF-beta-induced transcription of COL1A2; via its interaction with TFE3 at E-boxes in the gene proximal promoter. Plays a role in the repression of hematopoietic precursor cell growth. Promotes IL2 deprivation-induced apoptosis in T-lymphocytes, via repression of TSC22D3/GILZ transcription and activation of the caspase cascade. Its function is as follows. May act to negatively regulate TGFB3 signaling and thereby inhibit cell death in mammary gland cells. In terms of biological role, positively regulates cell death in response to TGFB3 during mammary gland involution. The sequence is that of TSC22 domain family protein 1 from Macaca fascicularis (Crab-eating macaque).